A 348-amino-acid chain; its full sequence is D-alanine--D-alanine ligase (348 aa).

One can recognise an ATP-grasp domain in the interval 132-334 (KRVLESIGIP…YPDLIEELVT (203 aa)). 162-217 (LARLTFPIFVKPANMGSSVGISKAQTKVELRKAIQLALTYDSRVLIEQGVVAREIE) is a binding site for ATP. Mg(2+) is bound by residues D288, E301, and N303.

It belongs to the D-alanine--D-alanine ligase family. Mg(2+) serves as cofactor. It depends on Mn(2+) as a cofactor.

It localises to the cytoplasm. The catalysed reaction is 2 D-alanine + ATP = D-alanyl-D-alanine + ADP + phosphate + H(+). Its pathway is cell wall biogenesis; peptidoglycan biosynthesis. Functionally, cell wall formation. This chain is D-alanine--D-alanine ligase, found in Streptococcus pyogenes serotype M6 (strain ATCC BAA-946 / MGAS10394).